We begin with the raw amino-acid sequence, 359 residues long: MPAHLLQEEISSSYTTTTTITAPPSRVLQNGGGKLEKTPLYLEEDIRPEMRDDIYDPTYQDKEGPKPKLEYVWRNIILMSLLHLGALYGITLIPTCKIYTYIWVLFYYLMGALGITAGAHRLWSHRTYKARLPLRVFLIIGNTMAFQNDVFEWSRDHRAHHKFSETDADPHNSRRGFFFSHVGWLLVRKHPAVKEKGSTLNLSDLRAEKLVMFQRRYYKPGVLLLCFILPTLVPWYLWDETFQNSLFFATLFRYALGLNVTWLVNSAAHMYGYRPYDKTINPRENILVSLGAAGEGFHNYHHTFPYDYSASEYRWHINFTTFFIDCMAAIGLAYDRKKVSKAAILARIKRTGEESYKSG.

The Cytoplasmic segment spans residues 1–72 (MPAHLLQEEI…EGPKPKLEYV (72 aa)). The chain crosses the membrane as a helical span at residues 73-93 (WRNIILMSLLHLGALYGITLI). Residue Asn-75 coordinates substrate. Residues 94–97 (PTCK) lie on the Lumenal side of the membrane. The chain crosses the membrane as a helical span at residues 98 to 118 (IYTYIWVLFYYLMGALGITAG). The Cytoplasmic portion of the chain corresponds to 119–217 (AHRLWSHRTY…EKLVMFQRRY (99 aa)). Fe cation contacts are provided by His-120 and His-125. The short motif at 120–125 (HRLWSH) is the Histidine box-1 element. Substrate contacts are provided by Asn-148, Arg-155, and Asp-156. Residues His-157, His-160, and His-161 each coordinate Fe cation. A Histidine box-2 motif is present at residues 157–161 (HRAHH). Substrate-binding residues include Arg-188 and Lys-189. Phosphoserine occurs at positions 198 and 203. A helical membrane pass occupies residues 218 to 237 (YKPGVLLLCFILPTLVPWYL). At 238–241 (WDET) the chain is on the lumenal side. Residues 242–263 (FQNSLFFATLFRYALGLNVTWL) traverse the membrane as a helical segment. Substrate is bound at residue Trp-262. Residues 264 to 359 (VNSAAHMYGY…RTGEESYKSG (96 aa)) lie on the Cytoplasmic side of the membrane. Positions 269, 298, 301, and 302 each coordinate Fe cation. A Histidine box-3 motif is present at residues 298–302 (HNYHH).

This sequence belongs to the fatty acid desaturase type 1 family. Requires Fe(2+) as cofactor.

It localises to the endoplasmic reticulum membrane. The enzyme catalyses octadecanoyl-CoA + 2 Fe(II)-[cytochrome b5] + O2 + 2 H(+) = (9Z)-octadecenoyl-CoA + 2 Fe(III)-[cytochrome b5] + 2 H2O. It carries out the reaction hexadecanoyl-CoA + 2 Fe(II)-[cytochrome b5] + O2 + 2 H(+) = (9Z)-hexadecenoyl-CoA + 2 Fe(III)-[cytochrome b5] + 2 H2O. Its function is as follows. Stearoyl-CoA desaturase that utilizes O(2) and electrons from reduced cytochrome b5 to introduce the first double bond into saturated fatty acyl-CoA substrates. Catalyzes the insertion of a cis double bond at the delta-9 position into fatty acyl-CoA substrates including palmitoyl-CoA and stearoyl-CoA. Gives rise to a mixture of 16:1 and 18:1 unsaturated fatty acids. Plays an important role in lipid biosynthesis. Plays an important role in regulating the expression of genes that are involved in lipogenesis and in regulating mitochondrial fatty acid oxidation. Plays an important role in body energy homeostasis. Contributes to the biosynthesis of membrane phospholipids, cholesterol esters and triglycerides. The sequence is that of Stearoyl-CoA desaturase (SCD) from Bos taurus (Bovine).